Consider the following 704-residue polypeptide: Chloride intracellular channel protein 6 (704 aa).

The segment covering 1-13 (MAEAAEPEGVAPG) has biased composition (low complexity). Residues 1–446 (MAEAAEPEGV…EDGEASEPRA (446 aa)) form a disordered region. Residues 39 to 48 (EGPEGSEGAE) are compositionally biased toward acidic residues. At Ser-44 the chain carries Phosphoserine. The span at 67 to 83 (RGPEAEARGTRGAHGET) shows a compositional bias: basic and acidic residues. Residues 90 to 100 (PEGAEVPQGGE) show a composition bias toward low complexity. Residues 121–147 (PRGEAQREPEDSAAPERQEEAEQRPEV) are compositionally biased toward basic and acidic residues. 13 consecutive repeat copies span residues 157 to 166 (GDSVDAEGPL), 167 to 176 (GDNIEAEGPA), 177 to 186 (GDSVEAEGRV), 187 to 196 (GDSVDAEGPA), 197 to 206 (GDSVDAEGPL), 207 to 216 (GDNIQAEGPA), 217 to 226 (GDSVDAEGRV), 227 to 236 (GDSVDAEGPA), 237 to 246 (GDSVDAEGRV), 247 to 256 (GDSVEAGDPA), 257 to 266 (GDGVEAGVPA), 267 to 276 (GDSVEAEGPA), and 277 to 286 (GDSMDAEGPA). The segment at 157-282 (GDSVDAEGPL…EGPAGDSMDA (126 aa)) is 13 X 10 AA tandem repeat of G-D-[SNG]-[VIM]-[DEQ]-A-[EAG]-[GDVE]-[PRG]-[LAVP]. Positions 295-306 (EPQQSGDGSLSP) are enriched in polar residues. Basic and acidic residues-rich tracts occupy residues 350 to 360 (ARADAGEDRVG) and 371 to 385 (EERR…REEE). Phosphoserine occurs at positions 397 and 442. Residues 434-446 (GRREDGEASEPRA) are compositionally biased toward basic and acidic residues. A G-site motif is present at residues 487–490 (CPFS). Residues 489 to 509 (FSQRLFMILWLKGVIFNVTTV) form a helical membrane-spanning segment. In terms of domain architecture, GST C-terminal spans 556-704 (YPKLGTQHPE…AYSDVAKRMK (149 aa)).

This sequence belongs to the chloride channel CLIC family. Monomer (soluble state). Interacts with dopamine receptors DRD2, DRD3 and DRD4. Post-translationally, phosphorylated. Expressed in brain, placenta, pancreas, liver, lung, heart, kidney, liver, spleen, soleus muscle, and brown fat.

Its subcellular location is the cytoplasm. The protein localises to the cell membrane. It carries out the reaction chloride(in) = chloride(out). Its activity is regulated as follows. Channel activity is redox- and pH-regulated. Inhibited by IAA-94. Its function is as follows. In the soluble state, catalyzes glutaredoxin-like thiol disulfide exchange reactions with reduced glutathione as electron donor. Can insert into membranes and form voltage-dependent chloride-selective channels. The channel opens upon membrane depolarization at positive voltages and closes at negative membrane voltages. May play a critical role in water-secreting cells, possibly through the regulation of chloride ion transport. In Homo sapiens (Human), this protein is Chloride intracellular channel protein 6.